We begin with the raw amino-acid sequence, 258 residues long: Imidazole glycerol phosphate synthase subunit HisF (258 aa).

Residues Asp12 and Asp131 contribute to the active site.

The protein belongs to the HisA/HisF family. Heterodimer of HisH and HisF.

The protein resides in the cytoplasm. The catalysed reaction is 5-[(5-phospho-1-deoxy-D-ribulos-1-ylimino)methylamino]-1-(5-phospho-beta-D-ribosyl)imidazole-4-carboxamide + L-glutamine = D-erythro-1-(imidazol-4-yl)glycerol 3-phosphate + 5-amino-1-(5-phospho-beta-D-ribosyl)imidazole-4-carboxamide + L-glutamate + H(+). Its pathway is amino-acid biosynthesis; L-histidine biosynthesis; L-histidine from 5-phospho-alpha-D-ribose 1-diphosphate: step 5/9. Functionally, IGPS catalyzes the conversion of PRFAR and glutamine to IGP, AICAR and glutamate. The HisF subunit catalyzes the cyclization activity that produces IGP and AICAR from PRFAR using the ammonia provided by the HisH subunit. This Nocardioides sp. (strain ATCC BAA-499 / JS614) protein is Imidazole glycerol phosphate synthase subunit HisF.